Here is a 303-residue protein sequence, read N- to C-terminus: Putative S-adenosyl-L-methionine-dependent methyltransferase MAV_4435 (303 aa).

S-adenosyl-L-methionine contacts are provided by residues D129 and 158–159 (DL).

The protein belongs to the UPF0677 family.

Functionally, exhibits S-adenosyl-L-methionine-dependent methyltransferase activity. The protein is Putative S-adenosyl-L-methionine-dependent methyltransferase MAV_4435 of Mycobacterium avium (strain 104).